A 3332-amino-acid polypeptide reads, in one-letter code: Nonribosomal peptide synthetase imqB (3332 aa).

The tract at residues 230–622 (FSEQVKAHPG…IGRKDTQVKV (393 aa)) is adenylation 1. In terms of domain architecture, Carrier 1 spans 764-846 (GRITPQEKLL…DMARCITRVD (83 aa)). Ser-801 is modified (O-(pantetheine 4'-phosphoryl)serine). The segment at 886–1314 (DIYPCTPLQE…NCLTRKELHQ (429 aa)) is condensation 1. The segment at 1336-1740 (EVSNTRPTAP…GRKDRQLKVR (405 aa)) is adenylation 2. The Carrier 2 domain occupies 1880 to 1954 (AIATPKEEKL…EMAEKAAETG (75 aa)). At Ser-1915 the chain carries O-(pantetheine 4'-phosphoryl)serine. The condensation 2 stretch occupies residues 1992-2402 (EDIYPCTPLQ…CLSEIDTQQI (411 aa)). The adenylation 3 stretch occupies residues 2422–2819 (AQQAREHPAT…GRKDTQVKIR (398 aa)). Residues 2963–3039 (EVATNDEAAV…DLASRIGRVE (77 aa)) enclose the Carrier 3 domain. Ser-3000 is subject to O-(pantetheine 4'-phosphoryl)serine. A thioesterase (TE) domain region spans residues 3058–3323 (SSNPTLIQGQ…ETTRHIRDFC (266 aa)).

The protein belongs to the NRP synthetase family.

Its pathway is secondary metabolite biosynthesis. Functionally, nonribosomal peptide synthetase; part of the gene cluster that mediates the biosynthesis of imizoquins A to D, tripeptide-derived alkaloids that serve a protective role against oxidative stress that are essential for normal germination. ImqB is a canonical three-module NRPS that assembles the tripeptide backbone of the imizoquins via condensation of Trp, Tyr, and Leu-derived precursors. N-methylation by imqF and phenol oxidation by imqC, followed by cyclization via the FAD-dependent oxidase imqH carry out the three-step transformation of L-tyrosine into tetrahydroisoquinoline. Importantly, this sequence requires the presence of a free amine in the tyrosine moiety, indicating that isoquinoline formation occurs prior to peptide bond formation. The imidazolidin-4-one ring of imizoquins could form following additional oxidation of the methyl-derived bridgehead carbon by imqH. Lastly, O-methylation by imqG and leucine hydroxylation by imqE complete biosynthesis of the imizoquins. The polypeptide is Nonribosomal peptide synthetase imqB (Aspergillus flavus (strain ATCC 200026 / FGSC A1120 / IAM 13836 / NRRL 3357 / JCM 12722 / SRRC 167)).